Consider the following 153-residue polypeptide: Probable histone H2A.4 (153 aa).

The span at 1 to 12 shows a compositional bias: basic residues; it reads MDSGTKVKKGAA. 2 disordered regions span residues 1–30 and 129–153; these read MDSGTKVKKGAAGRRSGGGPKKKPVSRSVK and KSEKAASTTKTPKSPSKATKSPKKS. Residues 133-147 are compositionally biased toward low complexity; the sequence is AASTTKTPKSPSKAT. Positions 149 to 152 match the SPKK motif motif; that stretch reads SPKK.

This sequence belongs to the histone H2A family. As to quaternary structure, the nucleosome is a histone octamer containing two molecules each of H2A, H2B, H3 and H4 assembled in one H3-H4 heterotetramer and two H2A-H2B heterodimers. The octamer wraps approximately 147 bp of DNA. In terms of processing, not ubiquitinated.

The protein localises to the nucleus. It is found in the chromosome. Its function is as follows. Core component of nucleosome. Nucleosomes wrap and compact DNA into chromatin, limiting DNA accessibility to the cellular machineries which require DNA as a template. Histones thereby play a central role in transcription regulation, DNA repair, DNA replication and chromosomal stability. DNA accessibility is regulated via a complex set of post-translational modifications of histones, also called histone code, and nucleosome remodeling. This Arabidopsis thaliana (Mouse-ear cress) protein is Probable histone H2A.4.